A 155-amino-acid chain; its full sequence is Ribosomal RNA large subunit methyltransferase H (155 aa).

Residues Leu72, Gly103, and 122-127 (LSDLTL) contribute to the S-adenosyl-L-methionine site.

The protein belongs to the RNA methyltransferase RlmH family. As to quaternary structure, homodimer.

It localises to the cytoplasm. It carries out the reaction pseudouridine(1915) in 23S rRNA + S-adenosyl-L-methionine = N(3)-methylpseudouridine(1915) in 23S rRNA + S-adenosyl-L-homocysteine + H(+). Functionally, specifically methylates the pseudouridine at position 1915 (m3Psi1915) in 23S rRNA. The protein is Ribosomal RNA large subunit methyltransferase H of Polaromonas naphthalenivorans (strain CJ2).